Consider the following 396-residue polypeptide: DNA polymerase processivity factor (396 aa).

A disordered region spans residues 306 to 396 (AEGGESSQKV…VPKTTFNPLI (91 aa)). Residues 376–386 (SDSSQSRDRGK) show a composition bias toward basic and acidic residues.

It belongs to the herpesviridae DNA polymerase accessory subunit family. In terms of assembly, homooligomerizes and adopts an oligomeric ring-shaped structure composed of 6 subunits. Forms a complex with the DNA-binding protein, the DNA polymerase subunit, and the alkaline exonuclease.

It localises to the virion tegument. The protein resides in the host nucleus. Functionally, plays an essential role in the viral lytic DNA replication by acting as the polymerase accessory subunit. Stimulates the viral DNA polymerase activity and appears to function with it as a holoenzyme. Increases the processivity of the viral polymerase, probably by acting as a sliding clamp that prevents dissociation of the polymerase from the active template. The chain is DNA polymerase processivity factor (ORF59) from Homo sapiens (Human).